We begin with the raw amino-acid sequence, 125 residues long: Interferon-induced transmembrane protein 1 (125 aa).

Residues 1–36 (MHKEEHEVAVLGPPPSTILPRSTVINIHSETSVPDH) are Cytoplasmic-facing. Position 16 is a phosphoserine (serine 16). The segment at residues 37–57 (VVWSLFNTLFLNWCCLGFIAF) is an intramembrane region (helical). Residues cysteine 50, cysteine 51, and cysteine 84 are each lipidated (S-palmitoyl cysteine). Residues 58–86 (AYSVKSRDRKMVGDVTGAQAYASTAKCLN) are Cytoplasmic-facing. Residues 84–125 (CLNIWALILGILMTIGFILLLVFGSVTVYHIMLQIIQEKRGY) are interaction with CAV1. A helical membrane pass occupies residues 87-107 (IWALILGILMTIGFILLLVFG). The Extracellular segment spans residues 108-125 (SVTVYHIMLQIIQEKRGY).

This sequence belongs to the CD225/Dispanin family. Interacts with CD81. Part of a complex composed of CD19, CR2/CD21, CD81 and IFITM1/CD225 in the membrane of mature B-cells. Interacts with CAV1; this interaction enhances the ability of CAV1 in inhibiting ERK activation. In terms of processing, palmitoylation on membrane-proximal cysteines controls clustering in membrane compartments and antiviral activity. Bone (at protein level). Levels greatly elevated in colon cancer, cervical cancer, esophageal cancer and ovarian cancer. Expressed in glioma cell lines.

Its subcellular location is the cell membrane. It localises to the lysosome membrane. IFN-induced antiviral protein which inhibits the entry of viruses to the host cell cytoplasm, permitting endocytosis, but preventing subsequent viral fusion and release of viral contents into the cytosol. Active against multiple viruses, including influenza A virus, SARS coronaviruses (SARS-CoV and SARS-CoV-2), Marburg virus (MARV), Ebola virus (EBOV), Dengue virus (DNV), West Nile virus (WNV), human immunodeficiency virus type 1 (HIV-1) and hepatitis C virus (HCV). Can inhibit: influenza virus hemagglutinin protein-mediated viral entry, MARV and EBOV GP1,2-mediated viral entry and SARS-CoV and SARS-CoV-2 S protein-mediated viral entry. Also implicated in cell adhesion and control of cell growth and migration. Inhibits SARS-CoV-2 S protein-mediated syncytia formation. Plays a key role in the antiproliferative action of IFN-gamma either by inhibiting the ERK activation or by arresting cell growth in G1 phase in a p53-dependent manner. Acts as a positive regulator of osteoblast differentiation. In hepatocytes, IFITM proteins act in a coordinated manner to restrict HCV infection by targeting the endocytosed HCV virion for lysosomal degradation. IFITM2 and IFITM3 display anti-HCV activity that may complement the anti-HCV activity of IFITM1 by inhibiting the late stages of HCV entry, possibly in a coordinated manner by trapping the virion in the endosomal pathway and targeting it for degradation at the lysosome. In Homo sapiens (Human), this protein is Interferon-induced transmembrane protein 1.